We begin with the raw amino-acid sequence, 556 residues long: 2-succinyl-5-enolpyruvyl-6-hydroxy-3-cyclohexene-1-carboxylate synthase (556 aa).

This sequence belongs to the TPP enzyme family. MenD subfamily. Homodimer. It depends on Mg(2+) as a cofactor. Mn(2+) serves as cofactor. Requires thiamine diphosphate as cofactor.

The catalysed reaction is isochorismate + 2-oxoglutarate + H(+) = 5-enolpyruvoyl-6-hydroxy-2-succinyl-cyclohex-3-ene-1-carboxylate + CO2. The protein operates within quinol/quinone metabolism; 1,4-dihydroxy-2-naphthoate biosynthesis; 1,4-dihydroxy-2-naphthoate from chorismate: step 2/7. Its pathway is quinol/quinone metabolism; menaquinone biosynthesis. In terms of biological role, catalyzes the thiamine diphosphate-dependent decarboxylation of 2-oxoglutarate and the subsequent addition of the resulting succinic semialdehyde-thiamine pyrophosphate anion to isochorismate to yield 2-succinyl-5-enolpyruvyl-6-hydroxy-3-cyclohexene-1-carboxylate (SEPHCHC). The chain is 2-succinyl-5-enolpyruvyl-6-hydroxy-3-cyclohexene-1-carboxylate synthase from Saccharopolyspora erythraea (strain ATCC 11635 / DSM 40517 / JCM 4748 / NBRC 13426 / NCIMB 8594 / NRRL 2338).